The primary structure comprises 100 residues: Urease subunit gamma (100 aa).

It belongs to the urease gamma subunit family. Heterotrimer of UreA (gamma), UreB (beta) and UreC (alpha) subunits. Three heterotrimers associate to form the active enzyme.

Its subcellular location is the cytoplasm. It catalyses the reaction urea + 2 H2O + H(+) = hydrogencarbonate + 2 NH4(+). It functions in the pathway nitrogen metabolism; urea degradation; CO(2) and NH(3) from urea (urease route): step 1/1. This chain is Urease subunit gamma, found in Micrococcus luteus (strain ATCC 4698 / DSM 20030 / JCM 1464 / CCM 169 / CCUG 5858 / IAM 1056 / NBRC 3333 / NCIMB 9278 / NCTC 2665 / VKM Ac-2230) (Micrococcus lysodeikticus).